Consider the following 839-residue polypeptide: Putative AC9 transposase (839 aa).

Residues Ser-32–Pro-43 show a composition bias toward polar residues. Positions Ser-32–Thr-85 are disordered. A compositionally biased stretch (pro residues) spans Gln-55–Pro-70.

This Zea mays (Maize) protein is Putative AC9 transposase.